Reading from the N-terminus, the 791-residue chain is Cellobionic acid phosphorylase (791 aa).

The Proton donor role is filled by Asp-478.

This sequence belongs to the glycosyl hydrolase 94 family. Cellobionic acid phosphorylase subfamily. In terms of assembly, homodimer.

It carries out the reaction 4-O-beta-D-glucopyranosyl-D-gluconate + phosphate = D-gluconate + alpha-D-glucose 1-phosphate. It functions in the pathway glycan metabolism; cellulose degradation. Catalyzes the reversible phosphorolysis of cellobionic acid (4-O-beta-D-glucopyranosyl-D-gluconate), a probable step in cellulose degradation. May be part of a metabolic pathway where cellobionic acid is converted into alpha-D-glucose 1-phosphate and D-gluconic acid to enter glycolysis and the pentose phosphate pathway, respectively. Produces 4-O-beta-D-glucopyranosyl-D-glucuronate from alpha-D-glucose 1-phosphate and D-glucuronate with low activity in the synthetic direction. The protein is Cellobionic acid phosphorylase of Neurospora crassa (strain ATCC 24698 / 74-OR23-1A / CBS 708.71 / DSM 1257 / FGSC 987).